Reading from the N-terminus, the 468-residue chain is Alcohol dehydrogenase (quinone), cytochrome c subunit (468 aa).

The N-terminal stretch at 1-23 (MINRLKVTFSAAAFSLLAGTALA) is a signal peptide. Cytochrome c domains lie at 31-134 (ALVQ…MHGV), 178-293 (PEIA…KSLP), and 317-407 (TASV…RTSW). The heme c site is built by Cys-45, Cys-48, His-49, Cys-193, Cys-196, His-197, Cys-330, Cys-333, and His-334.

The alcohol dehydrogenase multicomponent enzyme system is composed of a dehydrogenase subunit I (AdhA) and a cytochrome c subunit II (AdhB). It depends on heme c as a cofactor.

It localises to the cell membrane. It catalyses the reaction ethanol + a ubiquinone = a ubiquinol + acetaldehyde. Its function is as follows. Cytochrome c component of the alcohol dehydrogenase multicomponent enzyme system which is involved in the production of acetic acid and in the ethanol oxidase respiratory chain. Quinohemoprotein alcohol dehydrogenase (ADH) catalyzes the oxidation of ethanol to acetaldehyde by transferring electrons to the ubiquinone embedded in the membrane phospholipids. The electrons transfer from ethanol to membranous ubiquinone occurs from pyrroloquinoline quinone (PQQ) to one heme c in subunit I (AdhA), and finally to two heme c in subunit II (AdhB). Besides ubiquinone reduction, ADH also has a ubiquinol (QH2) oxidation reaction which mediates electron transfer from ubiquinol to the non-energy generating bypass oxidase system. The electrons transfer occurs from ubiquinol (QH2) to the additional heme c within subunit II (AdhB). The sequence is that of Alcohol dehydrogenase (quinone), cytochrome c subunit from Gluconacetobacter polyoxogenes (Acetobacter polyoxogenes).